We begin with the raw amino-acid sequence, 319 residues long: 1-aminocyclopropane-1-carboxylate oxidase (319 aa).

The 101-residue stretch at 153–253 (PTFGTKVSNY…RMSIASFYNP (101 aa)) folds into the Fe2OG dioxygenase domain. Fe cation contacts are provided by H177, D179, and H234.

The protein belongs to the iron/ascorbate-dependent oxidoreductase family. Fe cation serves as cofactor.

The enzyme catalyses 1-aminocyclopropane-1-carboxylate + L-ascorbate + O2 = ethene + L-dehydroascorbate + hydrogen cyanide + CO2 + 2 H2O. It participates in alkene biosynthesis; ethylene biosynthesis via S-adenosyl-L-methionine; ethylene from S-adenosyl-L-methionine: step 2/2. The chain is 1-aminocyclopropane-1-carboxylate oxidase (ACO) from Actinidia deliciosa (Kiwi).